Reading from the N-terminus, the 145-residue chain is Probable DNA-directed RNA polymerases I and III subunit RPAC2 (145 aa).

The interval 1–52 is disordered; it reads MGKKSEKKVVEETMEVDEQPAVEPEAVPEEEPEVEDEDLNVPKKKKMEILDP. The segment covering 12–39 has biased composition (acidic residues); the sequence is ETMEVDEQPAVEPEAVPEEEPEVEDEDL.

This sequence belongs to the archaeal Rpo11/eukaryotic RPB11/RPC19 RNA polymerase subunit family. As to quaternary structure, component of the RNA polymerase I (Pol I) and RNA polymerase III (Pol III) complexes consisting of at least 13 and 17 subunits, respectively.

It is found in the nucleus. Its function is as follows. DNA-dependent RNA polymerase catalyzes the transcription of DNA into RNA using the four ribonucleoside triphosphates as substrates. Common core component of RNA polymerases I and III which synthesize ribosomal RNA precursors and small RNAs, such as 5S rRNA and tRNAs, respectively. This chain is Probable DNA-directed RNA polymerases I and III subunit RPAC2 (rpac-19), found in Caenorhabditis briggsae.